A 203-amino-acid polypeptide reads, in one-letter code: Thymidine kinase (203 aa).

Residues 9–16 and 87–90 contribute to the ATP site; these read ATMNAGKT and DEAQ. Glu-88 serves as the catalytic Proton acceptor. Residues Cys-145, Cys-147, Cys-181, and His-184 each contribute to the Zn(2+) site.

The protein belongs to the thymidine kinase family. Homotetramer.

It is found in the cytoplasm. The enzyme catalyses thymidine + ATP = dTMP + ADP + H(+). In Mesorhizobium japonicum (strain LMG 29417 / CECT 9101 / MAFF 303099) (Mesorhizobium loti (strain MAFF 303099)), this protein is Thymidine kinase.